A 796-amino-acid chain; its full sequence is Probable phosphoketolase 2 (796 aa).

This sequence belongs to the XFP family. Thiamine diphosphate is required as a cofactor.

The sequence is that of Probable phosphoketolase 2 from Lactiplantibacillus plantarum (strain ATCC BAA-793 / NCIMB 8826 / WCFS1) (Lactobacillus plantarum).